Reading from the N-terminus, the 544-residue chain is Chaperonin GroEL (544 aa).

ATP-binding positions include 29-32, Lys50, 86-90, Gly414, 479-481, and Asp495; these read TLGP, DGTTT, and DAA.

The protein belongs to the chaperonin (HSP60) family. In terms of assembly, forms a cylinder of 14 subunits composed of two heptameric rings stacked back-to-back. Interacts with the co-chaperonin GroES.

It localises to the cytoplasm. The catalysed reaction is ATP + H2O + a folded polypeptide = ADP + phosphate + an unfolded polypeptide.. Its function is as follows. Together with its co-chaperonin GroES, plays an essential role in assisting protein folding. The GroEL-GroES system forms a nano-cage that allows encapsulation of the non-native substrate proteins and provides a physical environment optimized to promote and accelerate protein folding. The polypeptide is Chaperonin GroEL (Treponema denticola (strain ATCC 35405 / DSM 14222 / CIP 103919 / JCM 8153 / KCTC 15104)).